Reading from the N-terminus, the 50-residue chain is Large ribosomal subunit protein eL39 (50 aa).

Belongs to the eukaryotic ribosomal protein eL39 family. Part of the 50S ribosomal subunit. Interacts weakly with protein L23.

Its function is as follows. Binds to the 23S rRNA. Forms part of the polypeptide exit tunnel. In Haloarcula marismortui (strain ATCC 43049 / DSM 3752 / JCM 8966 / VKM B-1809) (Halobacterium marismortui), this protein is Large ribosomal subunit protein eL39 (rpl39e).